Reading from the N-terminus, the 150-residue chain is Transcription antitermination protein NusB (150 aa).

It belongs to the NusB family.

In terms of biological role, involved in transcription antitermination. Required for transcription of ribosomal RNA (rRNA) genes. Binds specifically to the boxA antiterminator sequence of the ribosomal RNA (rrn) operons. The sequence is that of Transcription antitermination protein NusB from Streptococcus pyogenes serotype M1.